The sequence spans 114 residues: Biofilm growth-associated repressor (114 aa).

An HTH arsR-type domain is found at 17-111 (DMEKRANEVA…ALYTIFCAQE (95 aa)). Residues 51-74 (VGELEQQIGIGQPTLSQQLGVLRE) constitute a DNA-binding region (H-T-H motif).

In terms of biological role, represses an operon that comprises itself, XF_0764, XF_0765, XF_0766 and blh. Binds to a palindromic AT-rich sequence spanning the -10 region of the blh promoter and blocks transcription of the operon. The chain is Biofilm growth-associated repressor (bigR) from Xylella fastidiosa (strain 9a5c).